We begin with the raw amino-acid sequence, 367 residues long: DNA polymerase IV (367 aa).

The 185-residue stretch at 14–198 (IIHIDMDAFF…LPIAKFHGVG (185 aa)) folds into the UmuC domain. Positions 18 and 116 each coordinate Mg(2+). The active site involves E117.

This sequence belongs to the DNA polymerase type-Y family. In terms of assembly, monomer. The cofactor is Mg(2+).

It localises to the cytoplasm. It catalyses the reaction DNA(n) + a 2'-deoxyribonucleoside 5'-triphosphate = DNA(n+1) + diphosphate. Its function is as follows. Poorly processive, error-prone DNA polymerase involved in untargeted mutagenesis. Copies undamaged DNA at stalled replication forks, which arise in vivo from mismatched or misaligned primer ends. These misaligned primers can be extended by PolIV. Exhibits no 3'-5' exonuclease (proofreading) activity. May be involved in translesional synthesis, in conjunction with the beta clamp from PolIII. The chain is DNA polymerase IV from Streptococcus thermophilus (strain ATCC BAA-491 / LMD-9).